A 156-amino-acid chain; its full sequence is MALEKSLVLLPLLVLILLVLGWVQPSLGKESRAKKFQRQHMDSGSSPNSNSTYCNQMMRRRNMTQGRCKPVNTFVHEPLVDVQNVCFQEKVTCKNGQGNCYKSNSSMHITDCRLTHGSRYPNCAYRTSTKERHIIVACEGSPYVPVHFDASVEDST.

The first 28 residues, 1-28 (MALEKSLVLLPLLVLILLVLGWVQPSLG), serve as a signal peptide directing secretion. Positions 35 and 38 each coordinate substrate. H40 (proton acceptor) is an active-site residue. N50 and N62 each carry an N-linked (GlcNAc...) asparagine glycan. 4 disulfides stabilise this stretch: C54-C112, C68-C123, C86-C138, and C93-C100. Substrate-binding positions include 69 to 73 (KPVNT) and K94. N104 carries N-linked (GlcNAc...) asparagine glycosylation. Substrate is bound at residue R113. H147 functions as the Proton donor in the catalytic mechanism.

This sequence belongs to the pancreatic ribonuclease family. Monomer. Interacts with and forms tight 1:1 complexes with RNH1. Dimerization of two such complexes may occur. Interaction with RNH1 inhibits this protein. Pancreas and other tissues and body fluids (indicating it may have other physiological functions besides its role in digestion).

The protein resides in the secreted. It catalyses the reaction an [RNA] containing cytidine + H2O = an [RNA]-3'-cytidine-3'-phosphate + a 5'-hydroxy-ribonucleotide-3'-[RNA].. The enzyme catalyses an [RNA] containing uridine + H2O = an [RNA]-3'-uridine-3'-phosphate + a 5'-hydroxy-ribonucleotide-3'-[RNA].. In terms of biological role, endonuclease that catalyzes the cleavage of RNA on the 3' side of pyrimidine nucleotides. Acts on single-stranded and double-stranded RNA. This is Ribonuclease pancreatic (RNASE1) from Pongo pygmaeus (Bornean orangutan).